We begin with the raw amino-acid sequence, 214 residues long: Phosphatidyl-N-methylethanolamine N-methyltransferase (214 aa).

The Lumenal segment spans residues 1–19 (MPLVALGVADLFNFVDYSK). The segment at residues 20-40 (TSLAISAAAIAFNPTFWNIVA) is an intramembrane region (helical). Residues 41 to 52 (RREYRTKFLTRA) are Lumenal-facing. A helical transmembrane segment spans residues 53–74 (FGGNAQVACYFLAVTIFGLGLV). Over 75 to 101 (RDFLYERALRDQPSHPLLEGTYVKYAA) the chain is Cytoplasmic. A helical membrane pass occupies residues 102–122 (YALLALGNLLVITSTMRLGIT). 106-108 (ALG) is an S-adenosyl-L-methionine binding site. The Lumenal segment spans residues 123-165 (GTFLGDYFGILMDGIVTGFPFNVTSAPMYYGSTMSFLGTALLY). A helical transmembrane segment spans residues 166–186 (GKPAGLLLTAWVLFVYIIAIQ). The Cytoplasmic segment spans residues 187-214 (FENPFTAEIYAKRDRERAKAAGTSKKEL). 188 to 189 (EN) is a binding site for S-adenosyl-L-methionine.

This sequence belongs to the class VI-like SAM-binding methyltransferase superfamily. PEMT/PEM2 methyltransferase family.

Its subcellular location is the endoplasmic reticulum membrane. It localises to the mitochondrion membrane. The enzyme catalyses a 1,2-diacyl-sn-glycero-3-phospho-N-methylethanolamine + S-adenosyl-L-methionine = a 1,2-diacyl-sn-glycero-3-phospho-N,N-dimethylethanolamine + S-adenosyl-L-homocysteine + H(+). It catalyses the reaction a 1,2-diacyl-sn-glycero-3-phospho-N,N-dimethylethanolamine + S-adenosyl-L-methionine = a 1,2-diacyl-sn-glycero-3-phosphocholine + S-adenosyl-L-homocysteine + H(+). Its pathway is phospholipid metabolism; phosphatidylcholine biosynthesis. In terms of biological role, catalyzes the second two steps of the methylation pathway of phosphatidylcholine biosynthesis, the SAM-dependent methylation of phosphatidylmonomethylethanolamine (PMME) to phosphatidyldimethylethanolamine (PDME) and of PDME to phosphatidylcholine (PC). This Neurospora crassa (strain ATCC 24698 / 74-OR23-1A / CBS 708.71 / DSM 1257 / FGSC 987) protein is Phosphatidyl-N-methylethanolamine N-methyltransferase.